The following is a 101-amino-acid chain: Small ribosomal subunit protein uS14 (101 aa).

It belongs to the universal ribosomal protein uS14 family. As to quaternary structure, part of the 30S ribosomal subunit. Contacts proteins S3 and S10.

Its function is as follows. Binds 16S rRNA, required for the assembly of 30S particles and may also be responsible for determining the conformation of the 16S rRNA at the A site. The sequence is that of Small ribosomal subunit protein uS14 from Enterobacter sp. (strain 638).